We begin with the raw amino-acid sequence, 403 residues long: Tyrosine--tRNA ligase (403 aa).

Positions 42 to 51 match the 'HIGH' region motif; that stretch reads PTAPDLHLGH. The 'KMSKS' region motif lies at 226-230; that stretch reads KMSKS. Lysine 229 serves as a coordination point for ATP. The region spanning 339–400 is the S4 RNA-binding domain; sequence LRIASLLTAA…GKRNFARVAL (62 aa).

It belongs to the class-I aminoacyl-tRNA synthetase family. TyrS type 2 subfamily. As to quaternary structure, homodimer.

It localises to the cytoplasm. It catalyses the reaction tRNA(Tyr) + L-tyrosine + ATP = L-tyrosyl-tRNA(Tyr) + AMP + diphosphate + H(+). Catalyzes the attachment of tyrosine to tRNA(Tyr) in a two-step reaction: tyrosine is first activated by ATP to form Tyr-AMP and then transferred to the acceptor end of tRNA(Tyr). This chain is Tyrosine--tRNA ligase, found in Xanthomonas campestris pv. campestris (strain ATCC 33913 / DSM 3586 / NCPPB 528 / LMG 568 / P 25).